The chain runs to 201 residues: Recombination protein RecR (201 aa).

A C4-type zinc finger spans residues 57-72 (CSDCRTFTEQDVCAIC). Positions 81–176 (GLVCVVESPA…MASRIAHGVP (96 aa)) constitute a Toprim domain.

It belongs to the RecR family.

Its function is as follows. May play a role in DNA repair. It seems to be involved in an RecBC-independent recombinational process of DNA repair. It may act with RecF and RecO. The protein is Recombination protein RecR of Pectobacterium atrosepticum (strain SCRI 1043 / ATCC BAA-672) (Erwinia carotovora subsp. atroseptica).